A 119-amino-acid chain; its full sequence is V-type proton ATPase subunit F (119 aa).

This sequence belongs to the V-ATPase F subunit family. In terms of assembly, V-ATPase is a heteromultimeric enzyme made up of two complexes: the ATP-hydrolytic V1 complex and the proton translocation V0 complex. The V1 complex consists of three catalytic AB heterodimers that form a heterohexamer, three peripheral stalks each consisting of EG heterodimers, one central rotor including subunits D and F, and the regulatory subunits C and H. The proton translocation complex V0 consists of the proton transport subunit a, a ring of proteolipid subunits c9c'', rotary subunit d, subunits e and f, and the accessory subunits ATP6AP1/Ac45 and ATP6AP2/PRR.

It is found in the cytoplasmic vesicle. The protein localises to the secretory vesicle. Its subcellular location is the synaptic vesicle membrane. The protein resides in the clathrin-coated vesicle membrane. Its function is as follows. Subunit of the V1 complex of vacuolar(H+)-ATPase (V-ATPase), a multisubunit enzyme composed of a peripheral complex (V1) that hydrolyzes ATP and a membrane integral complex (V0) that translocates protons. V-ATPase is responsible for acidifying and maintaining the pH of intracellular compartments and in some cell types, is targeted to the plasma membrane, where it is responsible for acidifying the extracellular environment. The chain is V-type proton ATPase subunit F (ATP6V1F) from Homo sapiens (Human).